The primary structure comprises 419 residues: Histidine--tRNA ligase (419 aa).

The protein belongs to the class-II aminoacyl-tRNA synthetase family. Homodimer.

Its subcellular location is the cytoplasm. The enzyme catalyses tRNA(His) + L-histidine + ATP = L-histidyl-tRNA(His) + AMP + diphosphate + H(+). This Caldicellulosiruptor saccharolyticus (strain ATCC 43494 / DSM 8903 / Tp8T 6331) protein is Histidine--tRNA ligase.